Consider the following 54-residue polypeptide: Ductus ejaculatorius peptide 99B (54 aa).

The N-terminal stretch at 1 to 21 (MKTPLFLLLVVLASLLGLALS) is a signal peptide. At Gln22 the chain carries Pyrrolidone carboxylic acid. A glycan (N-linked (GlcNAc...) asparagine) is linked at Asn25. Cys40 and Cys52 form a disulfide bridge. Residues 53 to 54 (RK) constitute a propeptide that is removed on maturation.

This sequence to paragonial peptide B. Ductus ejaculatorius.

The protein resides in the secreted. Its function is as follows. Induces post-mating responses; increased oviposition and reduced receptivity. The protein is Ductus ejaculatorius peptide 99B (Dup99B) of Drosophila melanogaster (Fruit fly).